The primary structure comprises 248 residues: 14-3-3 protein (248 aa).

Coiled coils occupy residues 13–33 (MAQLNENAERYDEMVETMRKI) and 91–111 (RQKIEKELSDICNDILKLLQE). 135-136 (RY) is an O-phospho-L-serine binding site. Position 214 is a phosphothreonine (threonine 214). The Putative polyglycylation target motif (T/G)X0-1(D/E)X1-3-G(D/E)X1-2(gE)2-4, where X is polar or negatively charged amino acid, and gE is polyglycylated glutamine motif lies at 237-248 (TDSAGDDNAEEK). Residue glutamate 246 is modified to 5-glutamyl polyglycine.

The protein belongs to the 14-3-3 family. In terms of assembly, homodimer. Homodimerizes via N-terminal domains. Oligomerizes forming homotrimers, homotetramers and protein filaments. Oligomerization is hindered by polyglycylation in vivo. Interacts with a large number of both cytosolic and membrane proteins in trophozoites and encysting parasites. Interacts with a serine/threonine protein kinase GL50803_112076 (gCDC7). Component of a multiprotein complex containing gCDC7 and GL50803_94117 (gDBF4), a regulatory subunit of gCDC7, during both the trophozoite and encysting stages of the parasite. Interacts with fructose-bisphosphate aldolase GL50803_11043 (gFBA), pyruvate kinase GL50803_17143 (gPyk), acetyl-CoA synthetase GL50803_13608 (gACS), protein kinase GL50803_22165 (gSTE), DEAD box RNA helicase GL50803_34684 (gVASA) and Golgi/cell cycle associated protein GL50803_17472 (gGCCA). Interacts with actin. Interacts with both monomeric phosphorylated and unphosphorylated actin. The interaction is enhanced by phosphorylation of actin and inhibited by Rho GTPase Rac. Phosphorylated constitutively throughout the life cycle. Phosphorylation is very high in trophozoites and encysting cells of 12 hours. Phosphorylated during excystation. Phosphorylation promotes its binding to various target proteins and is critical for encystation process. Phosphorylation modification is not influenced by polyglycylation modification. In terms of processing, polyglycylated on a glutamate residue, resulting in polyglycine chain on the gamma-carboxyl group. Polyglycylated by the tubulin--tyrosine ligase-like protein GL50803_8456 (gTTLL3). The polyglycine chain is shortened by metallopeptidases of the M20 family, namely dipeptidases GL50803_15832 (gDIP1) and GL50803_8407 (gDIP2). The length of the polyglycine chain is developmental stage-dependent. In trophozoites, glycine residues range from 10 to 31, with the greatest occurrence of 21 residues. In 12 hour encystation stage, glycine residues range from 6 to 22, with the greatest occurrence of 10 residues. The differential rate of polyglycylation/deglycylation during the encystation process regulates the intracellular localization of this protein. Relocalizes partially from the cytoplasm inside the nuclei following the shortening of the polyglycine chain in encysting cells. Polyglycylation modification is not influenced by phosphorylation modification. Polyglycylation prevents oligomerization in vivo.

It localises to the cytoplasm. Its subcellular location is the cytoskeleton. It is found in the nucleus. The protein localises to the cell projection. The protein resides in the cilium. It localises to the flagellum. Its subcellular location is the spindle. It is found in the nucleus envelope. The protein localises to the endoplasmic reticulum. Functionally, adapter protein implicated in the regulation of a large spectrum of both general and specialized signaling pathways. Binds to a large number of partners, usually by recognition of a phosphoserine or phosphothreonine motif. Binding generally results in the modulation of the activity of the binding partner. Binds with varying affinity to various synthetic phosphopeptides having a consensus binding motif RSX(pS/pT)XP, called mode-1, where X is any residue and pS/pT is a phosphorylated serine/threonine, and to synthetic phosphopeptides having a consensus binding motif Xp(S/T)X1-2-COOH, called mode-3, in which the phosphorylated residue occupies the penultimate C-terminal position in the target protein, but does not bind to their unphosphorylated counterparts. Binds to synthetic human RAF1 phosphopeptides, but not to their unphosphorylated forms. Binds to difopein, a polypeptide containing a phosphorylation-independent binding motif. Involved in encystation. Involved in cell proliferation. Required for actin and tubulin cytoskeletal organization. Regulates actin filament formation and nuclear size. This is 14-3-3 protein from Giardia intestinalis (strain ATCC 50803 / WB clone C6) (Giardia lamblia).